The following is a 68-amino-acid chain: Putative protein YfaH (68 aa).

The polypeptide is Putative protein YfaH (yfaH) (Escherichia coli (strain K12)).